Reading from the N-terminus, the 108-residue chain is uncharacterized protein (108 aa).

Residues 7-106 (CPRFEKAVDI…WATEWIDPSF (100 aa)) enclose the HTH hxlR-type domain.

This is an uncharacterized protein from Bacillus subtilis (strain 168).